Consider the following 676-residue polypeptide: E3 ubiquitin-protein ligase ICP0 (676 aa).

The RING-type zinc-finger motif lies at 13 to 52 (CCICLDAITGAARALPCLHAFCLACIRRWLEGRPTCPLCK). Disordered stretches follow at residues 101–135 (DLTA…EAAG), 266–486 (HLIP…PAPI), and 555–676 (AAIS…AWRQ). Over residues 110–135 (PGAGGEAGAAGGSEAGGGAGGAEAAG) the composition is skewed to gly residues. A compositionally biased stretch (acidic residues) spans 286 to 303 (SDSDSEGSEDDSWSESEE). Over residues 304–314 (SSSGLSTSDLT) the composition is skewed to low complexity. Residues 315–328 (AIDDTETEPETDAE) are compositionally biased toward acidic residues. Polar residues predominate over residues 351-361 (YVSTRGRQTPA). 2 stretches are compositionally biased toward low complexity: residues 375–388 (GRAA…SSRS) and 397–411 (LPAA…QARA). Gly residues predominate over residues 422–439 (GAGLGVAAGETAGWGVGS). Over residues 440–450 (EEGRGERRAKL) the composition is skewed to basic and acidic residues. Residues 474–484 (TPAPAPAPAPA) are compositionally biased toward pro residues. The segment covering 555–597 (AAISTRAPTPSPAGRAPAADPRRAGAPALAGAARAEAGRNGNP) has biased composition (low complexity).

Post-translationally, auto-ubiquitinated. The strongly acidic region might serve as a transcriptional activation domain, possibly regulated through phosphorylation by casein kinase II.

The enzyme catalyses S-ubiquitinyl-[E2 ubiquitin-conjugating enzyme]-L-cysteine + [acceptor protein]-L-lysine = [E2 ubiquitin-conjugating enzyme]-L-cysteine + N(6)-ubiquitinyl-[acceptor protein]-L-lysine.. In terms of biological role, evades nuclear antiviral defenses triggered by dsDNA viruses. Acts during the initial stages of lytic infection and the reactivation of latent viral genome. Prevents the antiviral effect of nuclear bodies by degrading host PML and SP100. The sequence is that of E3 ubiquitin-protein ligase ICP0 (BICP0) from Bos taurus (Bovine).